A 301-amino-acid polypeptide reads, in one-letter code: Growth-regulating factor 2 (301 aa).

Residues 11-46 (LFTATQWQELEHQALIYKYMAAGAPVPPDLLLHLRH) form the QLQ domain. 2 short sequence motifs (bipartite nuclear localization signal) span residues 83–102 (RRVEDPEPGRCRRTDGKKWR) and 120–127 (RGKNRSRK). Residues 87-131 (DPEPGRCRRTDGKKWRCSREAYGESKYCEKHMHRGKNRSRKPVEM) form the WRC domain.

This sequence belongs to the GRF family.

It localises to the nucleus. Transcription activator that plays a regulatory role in gibberellin-induced stem elongation. The chain is Growth-regulating factor 2 (GRF2) from Oryza sativa subsp. japonica (Rice).